A 489-amino-acid chain; its full sequence is Membrane-bound lytic murein transglycosylase F (489 aa).

Residues 1-32 (MFALTAYRLRCAAWLLATGIFLLLAGCSEAKA) form the signal peptide. Positions 33–268 (PTALERVQKE…RLKDRYYGHV (236 aa)) are non-LT domain. Positions 269-489 (DVLGYVGAYT…PEEDSGDEKL (221 aa)) are LT domain. Glutamate 315 is a catalytic residue. The interval 466 to 489 (AESGLHLPGVNKTRPEEDSGDEKL) is disordered. A compositionally biased stretch (basic and acidic residues) spans 478-489 (TRPEEDSGDEKL).

The protein in the N-terminal section; belongs to the bacterial solute-binding protein 3 family. It in the C-terminal section; belongs to the transglycosylase Slt family.

The protein resides in the cell outer membrane. It catalyses the reaction Exolytic cleavage of the (1-&gt;4)-beta-glycosidic linkage between N-acetylmuramic acid (MurNAc) and N-acetylglucosamine (GlcNAc) residues in peptidoglycan, from either the reducing or the non-reducing ends of the peptidoglycan chains, with concomitant formation of a 1,6-anhydrobond in the MurNAc residue.. In terms of biological role, murein-degrading enzyme that degrades murein glycan strands and insoluble, high-molecular weight murein sacculi, with the concomitant formation of a 1,6-anhydromuramoyl product. Lytic transglycosylases (LTs) play an integral role in the metabolism of the peptidoglycan (PG) sacculus. Their lytic action creates space within the PG sacculus to allow for its expansion as well as for the insertion of various structures such as secretion systems and flagella. The polypeptide is Membrane-bound lytic murein transglycosylase F (Pseudomonas aeruginosa (strain UCBPP-PA14)).